We begin with the raw amino-acid sequence, 217 residues long: Probable transaldolase (217 aa).

The active-site Schiff-base intermediate with substrate is the Lys83.

The protein belongs to the transaldolase family. Type 3B subfamily.

The protein resides in the cytoplasm. It carries out the reaction D-sedoheptulose 7-phosphate + D-glyceraldehyde 3-phosphate = D-erythrose 4-phosphate + beta-D-fructose 6-phosphate. Its pathway is carbohydrate degradation; pentose phosphate pathway; D-glyceraldehyde 3-phosphate and beta-D-fructose 6-phosphate from D-ribose 5-phosphate and D-xylulose 5-phosphate (non-oxidative stage): step 2/3. Functionally, transaldolase is important for the balance of metabolites in the pentose-phosphate pathway. This Clostridium botulinum (strain Hall / ATCC 3502 / NCTC 13319 / Type A) protein is Probable transaldolase.